The primary structure comprises 89 residues: Small ribosomal subunit protein uS15 (89 aa).

Belongs to the universal ribosomal protein uS15 family. Part of the 30S ribosomal subunit. Forms a bridge to the 50S subunit in the 70S ribosome, contacting the 23S rRNA.

Its function is as follows. One of the primary rRNA binding proteins, it binds directly to 16S rRNA where it helps nucleate assembly of the platform of the 30S subunit by binding and bridging several RNA helices of the 16S rRNA. Functionally, forms an intersubunit bridge (bridge B4) with the 23S rRNA of the 50S subunit in the ribosome. The sequence is that of Small ribosomal subunit protein uS15 from Aliivibrio salmonicida (strain LFI1238) (Vibrio salmonicida (strain LFI1238)).